A 67-amino-acid chain; its full sequence is Large ribosomal subunit protein bL28 (67 aa).

This sequence belongs to the bacterial ribosomal protein bL28 family.

The chain is Large ribosomal subunit protein bL28 from Nitratiruptor sp. (strain SB155-2).